Here is a 1426-residue protein sequence, read N- to C-terminus: Nephrocystin-4 (1426 aa).

Ser142 is subject to Phosphoserine. 2 disordered regions span residues 450–536 (GSEE…SPAQ) and 896–935 (RQGKGPQDVSRESDATRRRKLERMRSVRLQEAGGDLGRRG). Pro residues predominate over residues 474-486 (KPPTSPSSPPAPV). Residues 503 to 536 (SISQLAASPRSPTQHCLARPTSQLPHGSQASPAQ) show a composition bias toward polar residues. The sufficient for basal bodies localization stretch occupies residues 823 to 1426 (LTLANVGHPC…EAFCVKVIYQ (604 aa)).

It belongs to the NPHP4 family. In terms of assembly, interacts with NPHP1. Interacts with NPHP1 and RPGRIP1L/NPHP8; NPHP1, NPHP4 and RPGRIP1L are proposed to form a functional NPHP1-4-8 module localized to cell-cell contacts and the ciliary transition zone; NPHP4 mediates the interaction between NPHP1 and RPGRIP1L. Interacts with IQCB1/NPHP5; the interaction likely requires additional interactors. Interacts with RPGRIP1, CEP164, JADE1, PALS1, INADL, PARD6A, INVS, DVL2, LATS1. Interacts with INTU; INTU mediates the interaction between NPHP4 and DAAM1. Interacts with SPATA7. As to expression, expressed in kidney, skeletal muscle, heart and liver, and to a lesser extent in brain and lung.

It is found in the cytoplasm. The protein resides in the cytoskeleton. It localises to the cilium basal body. The protein localises to the microtubule organizing center. Its subcellular location is the centrosome. It is found in the cell junction. The protein resides in the tight junction. It localises to the nucleus. Involved in the organization of apical junctions; the function is proposed to implicate a NPHP1-4-8 module. Does not seem to be strictly required for ciliogenesis. Required for building functional cilia. Involved in the organization of the subapical actin network in multiciliated epithelial cells. Seems to recruit INT to basal bodies of motile cilia which subsequently interacts with actin-modifying proteins such as DAAM1. In cooperation with INVS may down-regulate the canonical Wnt pathway and promote the Wnt-PCP pathway by regulating expression and subcellular location of disheveled proteins. Stabilizes protein levels of JADE1 and promotes its translocation to the nucleus leading to cooperative inhibition of canonical Wnt signaling. Acts as a negative regulator of the hippo pathway by association with LATS1 and modifying LATS1-dependent phosphorylation and localization of WWTR1/TAZ. The protein is Nephrocystin-4 (NPHP4) of Homo sapiens (Human).